The sequence spans 553 residues: RNA exonuclease 1 (553 aa).

Ser-24 carries the phosphoserine modification. A coiled-coil region spans residues 167–194 (MEKINKLKELQKKKKITINDLVLSEQQL). An Exonuclease domain is found at 225-373 (IFALDCEMCL…EDARACLELT (149 aa)). Residues 509 to 533 (WNNLSTELEFIQDKKERLDKRRERE) adopt a coiled-coil conformation.

This sequence belongs to the REXO1/REXO3 family.

It localises to the nucleus. Its function is as follows. 3' exoribonuclease required for 5S rRNA maturation and for the proper maturation of the 5' cistron of the tRNA-Arg3 dicistronic gene. Involved with REX2 in the maturation of the 5.8S rRNA, and with REX2 and REX3, in the 3' processing of the U5L snRNA. In Saccharomyces cerevisiae (strain ATCC 204508 / S288c) (Baker's yeast), this protein is RNA exonuclease 1 (RNH70).